A 485-amino-acid polypeptide reads, in one-letter code: Glycogen synthase (485 aa).

Lys-17 provides a ligand contact to ADP-alpha-D-glucose.

It belongs to the glycosyltransferase 1 family. Bacterial/plant glycogen synthase subfamily.

It carries out the reaction [(1-&gt;4)-alpha-D-glucosyl](n) + ADP-alpha-D-glucose = [(1-&gt;4)-alpha-D-glucosyl](n+1) + ADP + H(+). It functions in the pathway glycan biosynthesis; glycogen biosynthesis. Synthesizes alpha-1,4-glucan chains using ADP-glucose. The protein is Glycogen synthase of Novosphingobium aromaticivorans (strain ATCC 700278 / DSM 12444 / CCUG 56034 / CIP 105152 / NBRC 16084 / F199).